Consider the following 335-residue polypeptide: Holliday junction branch migration complex subunit RuvB (335 aa).

Positions 1–181 are large ATPase domain (RuvB-L); it reads MSERVISPEP…FGLLIRLNLY (181 aa). Residues Leu20, Arg21, Gly62, Lys65, Thr66, Thr67, 128–130, Arg171, Tyr181, and Arg218 contribute to the ATP site; that span reads EDF. Mg(2+) is bound at residue Thr66. The interval 182–252 is small ATPAse domain (RuvB-S); it reads SPEDLEKIVT…IAGAGLALLQ (71 aa). Residues 255 to 335 are head domain (RuvB-H); sequence ELGLDDIDRR…KLNHSQKTLF (81 aa). Residues Arg310 and Arg315 each contribute to the DNA site.

This sequence belongs to the RuvB family. In terms of assembly, homohexamer. Forms an RuvA(8)-RuvB(12)-Holliday junction (HJ) complex. HJ DNA is sandwiched between 2 RuvA tetramers; dsDNA enters through RuvA and exits via RuvB. An RuvB hexamer assembles on each DNA strand where it exits the tetramer. Each RuvB hexamer is contacted by two RuvA subunits (via domain III) on 2 adjacent RuvB subunits; this complex drives branch migration. In the full resolvosome a probable DNA-RuvA(4)-RuvB(12)-RuvC(2) complex forms which resolves the HJ.

Its subcellular location is the cytoplasm. It carries out the reaction ATP + H2O = ADP + phosphate + H(+). In terms of biological role, the RuvA-RuvB-RuvC complex processes Holliday junction (HJ) DNA during genetic recombination and DNA repair, while the RuvA-RuvB complex plays an important role in the rescue of blocked DNA replication forks via replication fork reversal (RFR). RuvA specifically binds to HJ cruciform DNA, conferring on it an open structure. The RuvB hexamer acts as an ATP-dependent pump, pulling dsDNA into and through the RuvAB complex. RuvB forms 2 homohexamers on either side of HJ DNA bound by 1 or 2 RuvA tetramers; 4 subunits per hexamer contact DNA at a time. Coordinated motions by a converter formed by DNA-disengaged RuvB subunits stimulates ATP hydrolysis and nucleotide exchange. Immobilization of the converter enables RuvB to convert the ATP-contained energy into a lever motion, pulling 2 nucleotides of DNA out of the RuvA tetramer per ATP hydrolyzed, thus driving DNA branch migration. The RuvB motors rotate together with the DNA substrate, which together with the progressing nucleotide cycle form the mechanistic basis for DNA recombination by continuous HJ branch migration. Branch migration allows RuvC to scan DNA until it finds its consensus sequence, where it cleaves and resolves cruciform DNA. The protein is Holliday junction branch migration complex subunit RuvB of Methanoregula boonei (strain DSM 21154 / JCM 14090 / 6A8).